The sequence spans 304 residues: MPQQLSPINIETKKAISNARLKPLDIHYNESKPTTIQNTGKLVRINFKGGYISGGFLPNEYVLSSLHIYWGKEDDYGSNHLIDVYKYSGEINLVHWNKKKYSSYEEAKKHDDGLIIISIFLQVLDHKNVYFQKIVNQLDSIRSANTSAPFDSVFYLDNLLPSKLDYFTYLGTTINHSADAVWIIFPTPINIHSDQLSKFRTLLSSSNHDGKPHYITENYRNPYKLNDDTQVYYSGEIIRAATTSPARENYFMRWLSDLRETCFSYYQKYIEENKTFAIIAIVFVFILTAILFFMSRRYSREKQN.

The Alpha-carbonic anhydrase domain maps to 1 to 235 (MPQQLSPINI…NDDTQVYYSG (235 aa)). The Virion surface portion of the chain corresponds to 1-275 (MPQQLSPINI…YQKYIEENKT (275 aa)). Residues 276–294 (FAIIAIVFVFILTAILFFM) form a helical membrane-spanning segment. At 295 to 304 (SRRYSREKQN) the chain is on the intravirion side.

The protein belongs to the alpha-carbonic anhydrase family. As to quaternary structure, homodimer; disulfide-linked. In terms of processing, apparently non-glycosylated.

The protein localises to the virion membrane. Binds to chondroitin sulfate on the cell surface to provide virion attachment to target cell. The polypeptide is Cell surface-binding protein OPG105 (OPG105) (Bos taurus (Bovine)).